The following is a 132-amino-acid chain: Holo-[acyl-carrier-protein] synthase (132 aa).

Residues Asp-8 and Glu-62 each coordinate Mg(2+).

Belongs to the P-Pant transferase superfamily. AcpS family. Mg(2+) is required as a cofactor.

It is found in the cytoplasm. It carries out the reaction apo-[ACP] + CoA = holo-[ACP] + adenosine 3',5'-bisphosphate + H(+). Its function is as follows. Transfers the 4'-phosphopantetheine moiety from coenzyme A to a Ser of acyl-carrier-protein. This is Holo-[acyl-carrier-protein] synthase from Methylibium petroleiphilum (strain ATCC BAA-1232 / LMG 22953 / PM1).